Consider the following 294-residue polypeptide: Extracellular metalloprotease TRV_07111 (294 aa).

Residues 1 to 19 (MRFSVVFAAIAALSSVVTA) form the signal peptide. 3 N-linked (GlcNAc...) asparagine glycosylation sites follow: Asn49, Asn54, and Asn74. His185 lines the Zn(2+) pocket. Residue Glu186 is part of the active site. His189 is a Zn(2+) binding site. Cysteines 224 and 250 form a disulfide.

The protein belongs to the peptidase M43B family.

The protein resides in the secreted. Its function is as follows. Secreted metalloproteinase that allows assimilation of proteinaceous substrates. Plays a pivotal role as a pathogenicity determinant during infections and contributes to the ability of the pathogen to persist within the mammalian host. This chain is Extracellular metalloprotease TRV_07111, found in Trichophyton verrucosum (strain HKI 0517).